Reading from the N-terminus, the 28-residue chain is QQMCGRCGGTGQIIKNECKTCHGKKVTK.

Cystine bridges form between C4-C21 and C7-C18. N6-acetyllysine occurs at positions 15 and 25.

Post-translationally, the two N6-acetyllysines at position 15 and 25 have been deduced from the mass difference of 42. They are not common in venom proteins. As to expression, expressed by the venom gland.

The protein localises to the secreted. In terms of biological role, in vitro, inhibits proliferation of the mice ovarian cancer cells ID8. The sequence is that of Conotoxin Vi14b from Conus virgo (Virgin cone).